The primary structure comprises 37 residues: Photosystem II reaction center protein M (37 aa).

The chain crosses the membrane as a helical span at residues 7–27 (AFIAVLLFLAVPTAFLLIPYV).

It belongs to the PsbM family. In terms of assembly, PSII is composed of 1 copy each of membrane proteins PsbA, PsbB, PsbC, PsbD, PsbE, PsbF, PsbH, PsbI, PsbJ, PsbK, PsbL, PsbM, PsbT, PsbX, PsbY, PsbZ, Psb30/Ycf12, at least 3 peripheral proteins of the oxygen-evolving complex and a large number of cofactors. It forms dimeric complexes.

Its subcellular location is the plastid. The protein resides in the chloroplast thylakoid membrane. In terms of biological role, one of the components of the core complex of photosystem II (PSII). PSII is a light-driven water:plastoquinone oxidoreductase that uses light energy to abstract electrons from H(2)O, generating O(2) and a proton gradient subsequently used for ATP formation. It consists of a core antenna complex that captures photons, and an electron transfer chain that converts photonic excitation into a charge separation. This subunit is found at the monomer-monomer interface. This is Photosystem II reaction center protein M from Pinus thunbergii (Japanese black pine).